Consider the following 171-residue polypeptide: Protein phosphatase 1 regulatory subunit 1A (171 aa).

M1 bears the N-acetylmethionine mark. A disordered region spans residues 1–171 (MEPDNSPRKI…PLDSQGASLV (171 aa)). The segment at 9–12 (KIQF) is essential for activity. Positions 19–29 (PHLDPEAAEQI) are enriched in basic and acidic residues. T35 carries the phosphothreonine modification. Residues 42–54 (TSDQSSPEIDEDR) are essential for activity. A phosphoserine mark is found at S43, S46, S47, and S67. The segment covering 122–146 (GSASRPDTPGTAQKSAESNPKTQEQ) has biased composition (polar residues). The segment at 143–171 (TQEQCGVEPRTEDSSAHMLPLDSQGASLV) is interaction with PPP1R15A.

Belongs to the protein phosphatase inhibitor 1 family. As to quaternary structure, interacts with PPP1R15A. In terms of processing, phosphorylation of Thr-35 is required for activity.

In terms of biological role, inhibitor of protein-phosphatase 1. This protein may be important in hormonal control of glycogen metabolism. Hormones that elevate intracellular cAMP increase I-1 activity in many tissues. I-1 activation may impose cAMP control over proteins that are not directly phosphorylated by PKA. Following a rise in intracellular calcium, I-1 is inactivated by calcineurin (or PP2B). Does not inhibit type-2 phosphatases. This chain is Protein phosphatase 1 regulatory subunit 1A (Ppp1r1a), found in Mus musculus (Mouse).